Consider the following 429-residue polypeptide: Putative pentatricopeptide repeat-containing protein At1g03510 (429 aa).

10 PPR repeats span residues 11-45 (KLIS…FALP), 47-81 (DAHV…NFLS), 82-112 (NPFV…IPQR), 113-147 (NAVV…PNES), 148-180 (SFNA…RFKP), 181-215 (NLIT…LIEP), 216-246 (HPQL…MEDR), 247-281 (DVVA…KVTP), 282-312 (DDIA…MQGD), and 318-348 (SKDH…MPEK). A type E motif region spans residues 353–428 (TWGALLGACR…SPGSSWCLFK (76 aa)).

The protein belongs to the PPR family. PCMP-E subfamily.

This is Putative pentatricopeptide repeat-containing protein At1g03510 (PCMP-E3) from Arabidopsis thaliana (Mouse-ear cress).